The following is an 84-amino-acid chain: MKVKILQWHAVASWTWDAQDETCGICRMAFDGCCPDCKLPGDDCPLIWGACNHAFHLHCILKWVNSQTSQAHCPMCRREWQFKE.

The RING-type; atypical zinc finger occupies 34–77 (CPDCKLPGDDCPLIWGACNHAFHLHCILKWVNSQTSQAHCPMCR).

Belongs to the RING-box family. As to quaternary structure, part of the APC/C complex composed of at least 10 subunits. Interacts with APC2.

It localises to the cytoplasm. The protein resides in the nucleus. It participates in protein modification; protein ubiquitination. Component of the anaphase promoting complex/cyclosome (APC/C), a cell cycle-regulated E3 ubiquitin-protein ligase complex that controls progression through mitosis and the G1 phase of the cell cycle. The APC/C complex controls several key steps in the cell cycle by mediating ubiquitination and subsequent degradation of target proteins such as cyclins. The APC/C complex is required for the female gametophyte development and is involved in several aspect of development by controlling cell division and cell elongation. Involved in the control of endoreduplication. May recruit the E2 ubiquitin-conjugating enzymes to the complex. This Arabidopsis thaliana (Mouse-ear cress) protein is Anaphase-promoting complex subunit 11.